Here is a 625-residue protein sequence, read N- to C-terminus: Chaperone protein HtpG (625 aa).

The a; substrate-binding stretch occupies residues 1-339; sequence MNKQTLSFQA…SSDLPLNVSR (339 aa). Residues 340–557 form a b region; that stretch reads ELLQESRDVK…DGDISGHLAR (218 aa). A c region spans residues 558–625; that stretch reads LLKQAGQSAP…YVQRVNRLLV (68 aa).

This sequence belongs to the heat shock protein 90 family. In terms of assembly, homodimer.

Its subcellular location is the cytoplasm. Functionally, molecular chaperone. Has ATPase activity. This chain is Chaperone protein HtpG, found in Methylibium petroleiphilum (strain ATCC BAA-1232 / LMG 22953 / PM1).